The following is a 921-amino-acid chain: Translation initiation factor IF-2 (921 aa).

Residues 1 to 296 (MADNNTPGDK…PGPQKQRGRL (296 aa)) are disordered. Residues 80 to 89 (RPSGPRPGSS) show a composition bias toward low complexity. Residues 116–182 (ARVRDMEERR…AKKRFGEGEA (67 aa)) show a composition bias toward basic and acidic residues. Over residues 183 to 257 (PRPATAAPQQ…LGRAPGVAAG (75 aa)) the composition is skewed to low complexity. The region spanning 417–586 (PRSPVVTVMG…MIALQADILD (170 aa)) is the tr-type G domain. The interval 426–433 (GHVDHGKT) is G1. GTP is bound at residue 426–433 (GHVDHGKT). A G2 region spans residues 451 to 455 (GITQH). The G3 stretch occupies residues 474–477 (DTPG). GTP-binding positions include 474 to 478 (DTPGH) and 528 to 531 (NKID). Positions 528 to 531 (NKID) are G4. The tract at residues 564-566 (SAK) is G5.

It belongs to the TRAFAC class translation factor GTPase superfamily. Classic translation factor GTPase family. IF-2 subfamily.

The protein localises to the cytoplasm. Its function is as follows. One of the essential components for the initiation of protein synthesis. Protects formylmethionyl-tRNA from spontaneous hydrolysis and promotes its binding to the 30S ribosomal subunits. Also involved in the hydrolysis of GTP during the formation of the 70S ribosomal complex. In Bradyrhizobium sp. (strain BTAi1 / ATCC BAA-1182), this protein is Translation initiation factor IF-2.